A 153-amino-acid chain; its full sequence is Interleukin-4 (153 aa).

The signal sequence occupies residues 1–24; sequence MGLTSQLLPPLFFLLACAGNFAHG. Cystine bridges form between cysteine 27–cysteine 151, cysteine 48–cysteine 89, and cysteine 70–cysteine 123. N-linked (GlcNAc...) asparagine glycosylation is present at asparagine 62.

This sequence belongs to the IL-4/IL-13 family.

The protein resides in the secreted. In terms of biological role, participates in at least several B-cell activation processes as well as of other cell types. It is a costimulator of DNA-synthesis. It induces the expression of class II MHC molecules on resting B-cells. It enhances both secretion and cell surface expression of IgE and IgG1. It also regulates the expression of the low affinity Fc receptor for IgE (CD23) on both lymphocytes and monocytes. Positively regulates IL31RA expression in macrophages. Stimulates autophagy in dendritic cells by interfering with mTORC1 signaling and through the induction of RUFY4. This chain is Interleukin-4 (IL4), found in Papio anubis (Olive baboon).